We begin with the raw amino-acid sequence, 325 residues long: Sel1-repeat-containing protein YbeQ (325 aa).

Sel1-like repeat units lie at residues 26–61 (EAQYIVGFYYNRDSAIDSPDDEKAFYWLKLAAEQGH), 63–97 (EAQYSLGQKYTEDKSRHKDNEQAIFWLKKAALQGH), 103–130 (ALGWTLDRGEAPNYKEAVVWYQIAAESG), 132–167 (SYAQNNLGWMYRNGNGVAKDYALAFFWYKQAALQGH), 168–203 (SDAQNNLADLYEDGKGVAQNKTLAAFWYLKSAQQGN), 205–239 (HAQFQIAWDYNAGEGVDQDYKQAMYWYLKAAAQGS), 242–275 (AYVNIGYMYKHGQGVEKDYQAAFEWFTKAAECND), and 280–305 (YNLAIMYHYGEGRPVDLRQALDLYRK).

This sequence to E.coli YbeT.

The sequence is that of Sel1-repeat-containing protein YbeQ (ybeQ) from Escherichia coli (strain K12).